The primary structure comprises 390 residues: MKFVDEASILVVAGDGGNGCVSFRREKYIPKGGPDGGDGGDGGDVWMEADENLNTLIDYRFEKSFRAERGQNGASRDCTGKRGKDVTIKVPVGTRVIDQGTGETMGDMTKHGQRLLVAKGGWHGLGNTRFKSSVNRTPRQKTNGTPGDKRELLLELMLLADVGMLGMPNAGKSTFIRAVSAAKPKVADYPFTTLVPSLGVVRMDNEKSFVVADIPGLIEGAAEGAGLGIRFLKHLERCRVLLHLIDIDPIDGTDPVKNARIIISELEKYSQDLAAKPRWLVFNKIDLLDKAEAEEKAKAIAEALGWEDKYYLISAASGLGVKDLCWDVMTFIIENPVVQAEEAKQPEKVEFMWDDYHRQQLEEIAEEDDEDWDDDWDEDDEEGVEFIYKR.

Residues 1–159 (MKFVDEASIL…RELLLELMLL (159 aa)) form the Obg domain. The disordered stretch occupies residues 127 to 147 (NTRFKSSVNRTPRQKTNGTPG). A compositionally biased stretch (polar residues) spans 129–145 (RFKSSVNRTPRQKTNGT). In terms of domain architecture, OBG-type G spans 160–333 (ADVGMLGMPN…LCWDVMTFII (174 aa)). GTP contacts are provided by residues 166-173 (GMPNAGKS), 191-195 (FTTLV), 213-216 (DIPG), 283-286 (NKID), and 314-316 (SAA). Residues Ser173 and Thr193 each coordinate Mg(2+).

This sequence belongs to the TRAFAC class OBG-HflX-like GTPase superfamily. OBG GTPase family. Monomer. Mg(2+) serves as cofactor.

It localises to the cytoplasm. Its function is as follows. An essential GTPase which binds GTP, GDP and possibly (p)ppGpp with moderate affinity, with high nucleotide exchange rates and a fairly low GTP hydrolysis rate. Plays a role in control of the cell cycle, stress response, ribosome biogenesis and in those bacteria that undergo differentiation, in morphogenesis control. The polypeptide is GTPase Obg (Escherichia coli O7:K1 (strain IAI39 / ExPEC)).